The following is a 96-amino-acid chain: Large ribosomal subunit protein bL21 (96 aa).

Residues 73–84 (KRRKRYQSRNGH) are compositionally biased toward basic residues. The disordered stretch occupies residues 73 to 96 (KRRKRYQSRNGHRQQMTQIEVVSL). The segment covering 85–96 (RQQMTQIEVVSL) has biased composition (polar residues).

Belongs to the bacterial ribosomal protein bL21 family. In terms of assembly, part of the 50S ribosomal subunit. Contacts protein L20.

Its function is as follows. This protein binds to 23S rRNA in the presence of protein L20. This chain is Large ribosomal subunit protein bL21, found in Chlorobium phaeovibrioides (strain DSM 265 / 1930) (Prosthecochloris vibrioformis (strain DSM 265)).